The chain runs to 149 residues: UPF0260 protein PSPPH_1551 (149 aa).

Belongs to the UPF0260 family.

This chain is UPF0260 protein PSPPH_1551, found in Pseudomonas savastanoi pv. phaseolicola (strain 1448A / Race 6) (Pseudomonas syringae pv. phaseolicola (strain 1448A / Race 6)).